The sequence spans 104 residues: Conantokin-P (104 aa).

Positions 1 to 26 (MQLYTYLYLLVPLVTFHLILSTGTLA) are cleaved as a signal peptide. Positions 27-80 (HGGTLTERRSTDTTALKPEPVLLQKSDARSTDDNDKDRLTQMKRILKKRGNKAR) are excised as a propeptide. The disordered stretch occupies residues 29-87 (GTLTERRSTDTTALKPEPVLLQKSDARSTDDNDKDRLTQMKRILKKRGNKARGEEEHSK). The span at 52-66 (SDARSTDDNDKDRLT) shows a compositional bias: basic and acidic residues. Residues Glu-83, Glu-84, Glu-90, Glu-94, and Glu-103 each carry the 4-carboxyglutamate modification. A divalent metal cation contacts are provided by Glu-90 and Glu-94. Cys-91 and Cys-104 form a disulfide bridge.

The protein belongs to the conotoxin B superfamily. In terms of tissue distribution, expressed by the venom duct.

The protein localises to the secreted. Conantokins inhibit N-methyl-D-aspartate (NMDA) receptors. This toxin has the highest potency for the NR2B/GRIN2B subunit, followed by NR2A/GRIN2A, NR2C/GRIN2C, and NR2D/GRIN2D subunits. The sequence is that of Conantokin-P from Conus purpurascens (Purple cone).